Consider the following 427-residue polypeptide: Enolase (427 aa).

Position 163 (Q163) interacts with (2R)-2-phosphoglycerate. The active-site Proton donor is the E205. D242, E285, and D312 together coordinate Mg(2+). The (2R)-2-phosphoglycerate site is built by K337, R366, S367, and K388. K337 acts as the Proton acceptor in catalysis.

Belongs to the enolase family. Mg(2+) serves as cofactor.

The protein localises to the cytoplasm. The protein resides in the secreted. It is found in the cell surface. The catalysed reaction is (2R)-2-phosphoglycerate = phosphoenolpyruvate + H2O. The protein operates within carbohydrate degradation; glycolysis; pyruvate from D-glyceraldehyde 3-phosphate: step 4/5. Functionally, catalyzes the reversible conversion of 2-phosphoglycerate (2-PG) into phosphoenolpyruvate (PEP). It is essential for the degradation of carbohydrates via glycolysis. In Burkholderia orbicola (strain MC0-3), this protein is Enolase.